A 99-amino-acid polypeptide reads, in one-letter code: DNA-directed RNA polymerase subunit omega (99 aa).

It belongs to the RNA polymerase subunit omega family. The RNAP catalytic core consists of 2 alpha, 1 beta, 1 beta' and 1 omega subunit. When a sigma factor is associated with the core the holoenzyme is formed, which can initiate transcription.

The catalysed reaction is RNA(n) + a ribonucleoside 5'-triphosphate = RNA(n+1) + diphosphate. Functionally, promotes RNA polymerase assembly. Latches the N- and C-terminal regions of the beta' subunit thereby facilitating its interaction with the beta and alpha subunits. This Xanthomonas axonopodis pv. citri (strain 306) protein is DNA-directed RNA polymerase subunit omega.